Here is a 182-residue protein sequence, read N- to C-terminus: Probable phosphoheptose isomerase (182 aa).

The 154-residue stretch at 29–182 folds into the SIS domain; it reads ISSAISSGNK…MICAMIDEKF (154 aa). 44 to 46 is a binding site for substrate; sequence NGG. The Zn(2+) site is built by His53 and Glu57. Residues Glu57, 86–87, 112–114, Ser117, and Gln164 each bind substrate; these read ND and STS. Zn(2+) contacts are provided by Gln164 and His172.

This sequence belongs to the SIS family. GmhA subfamily. The cofactor is Zn(2+).

Its subcellular location is the cytoplasm. It carries out the reaction 2 D-sedoheptulose 7-phosphate = D-glycero-alpha-D-manno-heptose 7-phosphate + D-glycero-beta-D-manno-heptose 7-phosphate. Its pathway is carbohydrate biosynthesis; D-glycero-D-manno-heptose 7-phosphate biosynthesis; D-glycero-alpha-D-manno-heptose 7-phosphate and D-glycero-beta-D-manno-heptose 7-phosphate from sedoheptulose 7-phosphate: step 1/1. Catalyzes the isomerization of sedoheptulose 7-phosphate in D-glycero-D-manno-heptose 7-phosphate. The sequence is that of Probable phosphoheptose isomerase from Thermoplasma acidophilum (strain ATCC 25905 / DSM 1728 / JCM 9062 / NBRC 15155 / AMRC-C165).